The following is a 374-amino-acid chain: tRNA-specific 2-thiouridylase MnmA (374 aa).

Residues 12 to 19 and M38 contribute to the ATP site; that span reads GMSGGVDS. The tract at residues 98–100 is interaction with target base in tRNA; it reads NPD. Residue C103 is the Nucleophile of the active site. Residues C103 and C202 are joined by a disulfide bond. G128 is a binding site for ATP. Positions 152–154 are interaction with tRNA; that stretch reads KDQ. C202 acts as the Cysteine persulfide intermediate in catalysis. The tract at residues 316–317 is interaction with tRNA; sequence RY.

The protein belongs to the MnmA/TRMU family.

The protein localises to the cytoplasm. The enzyme catalyses S-sulfanyl-L-cysteinyl-[protein] + uridine(34) in tRNA + AH2 + ATP = 2-thiouridine(34) in tRNA + L-cysteinyl-[protein] + A + AMP + diphosphate + H(+). Catalyzes the 2-thiolation of uridine at the wobble position (U34) of tRNA, leading to the formation of s(2)U34. This chain is tRNA-specific 2-thiouridylase MnmA, found in Vibrio vulnificus (strain CMCP6).